A 532-amino-acid chain; its full sequence is Nectin-4 (532 aa).

Residues methionine 1 to cysteine 30 form the signal peptide. Residues glycine 31–lysine 142 enclose the Ig-like V-type domain. Residues glycine 31–leucine 344 lie on the Extracellular side of the membrane. 3 cysteine pairs are disulfide-bonded: cysteine 51-cysteine 125, cysteine 169-cysteine 221, and cysteine 266-cysteine 312. Ig-like C2-type domains follow at residues proline 146–threonine 235 and alanine 244–serine 328. The disordered stretch occupies residues glycine 152–leucine 179. Residues asparagine 189 and asparagine 282 are each glycosylated (N-linked (GlcNAc...) asparagine). The helical transmembrane segment at glycine 345 to valine 365 threads the bilayer. Topologically, residues asparagine 366–valine 532 are cytoplasmic. Residues glutamine 453 to methionine 491 are disordered. A compositionally biased stretch (acidic residues) spans proline 461–glutamine 474.

It belongs to the nectin family.

It is found in the cell membrane. Functionally, may be involved in cell adhesion. In Xenopus tropicalis (Western clawed frog), this protein is Nectin-4.